A 536-amino-acid chain; its full sequence is Phosphoenolpyruvate carboxykinase (ATP) (536 aa).

Substrate-binding residues include Arg-62, Tyr-203, and Lys-209. Residues Lys-209, His-228, and 244–252 (GLSGTGKTT) contribute to the ATP site. Residues Lys-209 and His-228 each contribute to the Mn(2+) site. Residue Asp-265 participates in Mn(2+) binding. Residues Glu-293, Arg-329, 445 to 446 (RI), and Thr-451 each bind ATP. Arg-329 contacts substrate.

The protein belongs to the phosphoenolpyruvate carboxykinase (ATP) family. As to quaternary structure, monomer. Mn(2+) serves as cofactor.

The protein resides in the cytoplasm. It catalyses the reaction oxaloacetate + ATP = phosphoenolpyruvate + ADP + CO2. It participates in carbohydrate biosynthesis; gluconeogenesis. Involved in the gluconeogenesis. Catalyzes the conversion of oxaloacetate (OAA) to phosphoenolpyruvate (PEP) through direct phosphoryl transfer between the nucleoside triphosphate and OAA. The sequence is that of Phosphoenolpyruvate carboxykinase (ATP) from Actinobacillus pleuropneumoniae serotype 5b (strain L20).